Consider the following 44-residue polypeptide: MRNIKTYLSVAPVLATLWFGSLAGLLIEINRLFPDALAFPFFSF.

A helical transmembrane segment spans residues 7 to 27 (YLSVAPVLATLWFGSLAGLLI).

It belongs to the PsaJ family.

It localises to the plastid. Its subcellular location is the chloroplast thylakoid membrane. May help in the organization of the PsaE and PsaF subunits. This Illicium oligandrum (Star anise) protein is Photosystem I reaction center subunit IX.